The following is a 264-amino-acid chain: Phosphatidylglycerol--prolipoprotein diacylglyceryl transferase (264 aa).

The next 3 helical transmembrane spans lie at 17–37 (LAIH…LWLA), 59–79 (LLFY…VLFY), and 95–115 (WKGG…MALF). Arg142 contributes to the a 1,2-diacyl-sn-glycero-3-phospho-(1'-sn-glycerol) binding site. The next 2 membrane-spanning stretches (helical) occupy residues 205-225 (GQVS…AEYF) and 241-261 (MGQW…VWAG).

Belongs to the Lgt family.

It is found in the cell inner membrane. The enzyme catalyses L-cysteinyl-[prolipoprotein] + a 1,2-diacyl-sn-glycero-3-phospho-(1'-sn-glycerol) = an S-1,2-diacyl-sn-glyceryl-L-cysteinyl-[prolipoprotein] + sn-glycerol 1-phosphate + H(+). It participates in protein modification; lipoprotein biosynthesis (diacylglyceryl transfer). Functionally, catalyzes the transfer of the diacylglyceryl group from phosphatidylglycerol to the sulfhydryl group of the N-terminal cysteine of a prolipoprotein, the first step in the formation of mature lipoproteins. This Methylibium petroleiphilum (strain ATCC BAA-1232 / LMG 22953 / PM1) protein is Phosphatidylglycerol--prolipoprotein diacylglyceryl transferase.